The following is a 397-amino-acid chain: Putative serine/threonine-protein kinase R301 (397 aa).

In terms of domain architecture, Protein kinase spans 25-397 (QIKSTSVGSG…IIRHFNSPRL (373 aa)). ATP is bound by residues 31–39 (VGSGGSDNI) and K53. The active-site Proton acceptor is D218.

It belongs to the protein kinase superfamily. Ser/Thr protein kinase family.

It is found in the virion. The catalysed reaction is L-seryl-[protein] + ATP = O-phospho-L-seryl-[protein] + ADP + H(+). It catalyses the reaction L-threonyl-[protein] + ATP = O-phospho-L-threonyl-[protein] + ADP + H(+). The chain is Putative serine/threonine-protein kinase R301 from Acanthamoeba polyphaga (Amoeba).